The sequence spans 93 residues: Auxin-responsive protein SAUR26 (93 aa).

It belongs to the ARG7 family. As to quaternary structure, interacts with PP2C-D1. As to expression, higher expression in thermo-responsive cultivars (e.g. cv. Alst-1, cv. Ang-0 and cv. Com-0) than in low thermo-responsive cultivars (e.g. cv. Dja-1, cv. El-0 and cv. Kon).

It is found in the cell membrane. Provide a mechanistic link between auxin and plasma membrane H(+)-ATPases (PM H(+)-ATPases, e.g. AHA1 and AHA2), and triggers PM H(+)-ATPases activity by promoting phosphorylation of their C-terminal autoinhibitory domain as a result of PP2C-D subfamily of type 2C phosphatases inhibition, thus leading to the acidification of the apoplast and the facilitation of solutes and water uptake to drive cell expansion. Functions as a positive effectors of cell expansion through modulation of auxin transport. Involved in thermo-responsiveness of plant architecture. Enhances plasma membrane H(+)-ATPase. Probably involved in light intensity mediated root development. This chain is Auxin-responsive protein SAUR26, found in Arabidopsis thaliana (Mouse-ear cress).